The following is a 270-amino-acid chain: Acyl-[acyl-carrier-protein]--UDP-N-acetylglucosamine O-acyltransferase (270 aa).

This sequence belongs to the transferase hexapeptide repeat family. LpxA subfamily. As to quaternary structure, homotrimer.

The protein localises to the cytoplasm. It carries out the reaction a (3R)-hydroxyacyl-[ACP] + UDP-N-acetyl-alpha-D-glucosamine = a UDP-3-O-[(3R)-3-hydroxyacyl]-N-acetyl-alpha-D-glucosamine + holo-[ACP]. The protein operates within glycolipid biosynthesis; lipid IV(A) biosynthesis; lipid IV(A) from (3R)-3-hydroxytetradecanoyl-[acyl-carrier-protein] and UDP-N-acetyl-alpha-D-glucosamine: step 1/6. Involved in the biosynthesis of lipid A, a phosphorylated glycolipid that anchors the lipopolysaccharide to the outer membrane of the cell. In Helicobacter pylori (strain HPAG1), this protein is Acyl-[acyl-carrier-protein]--UDP-N-acetylglucosamine O-acyltransferase.